The following is a 242-amino-acid chain: MPAKTPELEMMDEDRLIEEVLDKFVNCHEQTYEEFLRTFTHLSKDNVTKREAFGTNSSENNFTSIKFTQRNEPNDCRLSNKAIFLHTSSQCSEEEQIMIGDGQKAGSSFQGDLNRAGKVKVDNFLDIEDLDLDEEINPQLSKDVLLLPGQVEQEVSLSVPSYIPSVAIQPVTPGTKPRPTVKAADKQSKEIVGDEVQPFSLDEEFDYDAVVLTPKFTPAEMNAIKELSKQKTKSADLEDPHD.

Ser-57 is modified (phosphoserine).

Interacts with IFT122; the interaction associates IFTAP with IFT-A complex.

Functionally, seems to play a role in ciliary BBSome localization, maybe through interaction with IFT-A complex. The sequence is that of Intraflagellar transport-associated protein (IFTAP) from Bos taurus (Bovine).